The sequence spans 179 residues: Large ribosomal subunit protein uL5 (179 aa).

Belongs to the universal ribosomal protein uL5 family. As to quaternary structure, part of the 50S ribosomal subunit; part of the 5S rRNA/L5/L18/L25 subcomplex. Contacts the 5S rRNA and the P site tRNA. Forms a bridge to the 30S subunit in the 70S ribosome.

This is one of the proteins that bind and probably mediate the attachment of the 5S RNA into the large ribosomal subunit, where it forms part of the central protuberance. In the 70S ribosome it contacts protein S13 of the 30S subunit (bridge B1b), connecting the 2 subunits; this bridge is implicated in subunit movement. Contacts the P site tRNA; the 5S rRNA and some of its associated proteins might help stabilize positioning of ribosome-bound tRNAs. This chain is Large ribosomal subunit protein uL5, found in Vibrio atlanticus (strain LGP32) (Vibrio splendidus (strain Mel32)).